Consider the following 446-residue polypeptide: Tubulin beta-1 chain (446 aa).

Positions 11, 69, 138, 142, 143, 144, 204, and 226 each coordinate GTP. Glu-69 contributes to the Mg(2+) binding site.

Belongs to the tubulin family. Dimer of alpha and beta chains. A typical microtubule is a hollow water-filled tube with an outer diameter of 25 nm and an inner diameter of 15 nM. Alpha-beta heterodimers associate head-to-tail to form protofilaments running lengthwise along the microtubule wall with the beta-tubulin subunit facing the microtubule plus end conferring a structural polarity. Microtubules usually have 13 protofilaments but different protofilament numbers can be found in some organisms and specialized cells. Mg(2+) serves as cofactor.

It is found in the cytoplasm. Its subcellular location is the cytoskeleton. Tubulin is the major constituent of microtubules, a cylinder consisting of laterally associated linear protofilaments composed of alpha- and beta-tubulin heterodimers. Microtubules grow by the addition of GTP-tubulin dimers to the microtubule end, where a stabilizing cap forms. Below the cap, tubulin dimers are in GDP-bound state, owing to GTPase activity of alpha-tubulin. The sequence is that of Tubulin beta-1 chain (TUBB1) from Suillus bovinus (Jersey cow bolete).